Here is a 408-residue protein sequence, read N- to C-terminus: Histidine--tRNA ligase (408 aa).

Belongs to the class-II aminoacyl-tRNA synthetase family. Homodimer.

The protein localises to the cytoplasm. The catalysed reaction is tRNA(His) + L-histidine + ATP = L-histidyl-tRNA(His) + AMP + diphosphate + H(+). The sequence is that of Histidine--tRNA ligase from Campylobacter jejuni subsp. jejuni serotype O:23/36 (strain 81-176).